A 175-amino-acid chain; its full sequence is Protein MODIFYING WALL LIGNIN-1 (175 aa).

A signal peptide spans 1 to 24; that stretch reads MFIFLFGLAAFFLCLSAEFQKAKA. The Cytoplasmic segment spans residues 25 to 52; it reads LLRAQVFLKGKDLKWDGESCYLPENRAF. The chain crosses the membrane as a helical span at residues 53 to 73; that stretch reads GLGIAALVCVSVAQIVGNVVI. Over 74-86 the chain is Extracellular; it reads CRGFTKTDKTRTT. Residues 87–107 form a helical membrane-spanning segment; that stretch reads IFCIILLLFSWVNFAVAVTLI. The Cytoplasmic segment spans residues 108–135; the sequence is SVGASMNREQIYGKGWLNRECYLVKDGV. The chain crosses the membrane as a helical span at residues 136–156; that stretch reads FAASGFLSVTTMAAILGAFAF. The Extracellular portion of the chain corresponds to 157–175; the sequence is KVKPSLQVENHDKRHTQNV.

It belongs to the DESIGUAL family. In terms of assembly, interacts with CRK19.

The protein resides in the cell membrane. Its function is as follows. Together with MWL2, contributes to secondary cell wall biology, specifically lignin biosynthesis. This is Protein MODIFYING WALL LIGNIN-1 from Arabidopsis thaliana (Mouse-ear cress).